We begin with the raw amino-acid sequence, 357 residues long: Queuosine-tRNA galactosyltransferase (357 aa).

Belongs to the glycosyltransferase 2 family.

Its subcellular location is the cytoplasm. The enzyme catalyses queuosine(34) in tRNA(Tyr) + UDP-alpha-D-galactose = O-5''-beta-D-galactosylqueuosine(34) in tRNA(Tyr) + UDP + H(+). Functionally, glycosyltransferase that specifically catalyzes galactosylation of cytoplasmic tRNA(Tyr) modified with queuosine at position 34 (queuosine(34)). Galactosylates the cyclopentene hydroxyl group of queuosine(34) in tRNA(Tyr) to form galactosyl-queuosine(34). Mannosylation of queuosine(34) in tRNA(Tyr) is required to slow-down elongation at cognate codons UAC and suppress stop codon readthrough, thereby regulating protein translation. The chain is Queuosine-tRNA galactosyltransferase from Mus musculus (Mouse).